A 125-amino-acid polypeptide reads, in one-letter code: Small ribosomal subunit protein uS13 (125 aa).

Residues 92-125 form a disordered region; sequence RRSLPARGQRTRTNARTRKGKRKTVAGKKKAGKK.

The protein belongs to the universal ribosomal protein uS13 family. Part of the 30S ribosomal subunit. Forms a loose heterodimer with protein S19. Forms two bridges to the 50S subunit in the 70S ribosome.

Functionally, located at the top of the head of the 30S subunit, it contacts several helices of the 16S rRNA. In the 70S ribosome it contacts the 23S rRNA (bridge B1a) and protein L5 of the 50S subunit (bridge B1b), connecting the 2 subunits; these bridges are implicated in subunit movement. Contacts the tRNAs in the A and P-sites. This Chlorobaculum parvum (strain DSM 263 / NCIMB 8327) (Chlorobium vibrioforme subsp. thiosulfatophilum) protein is Small ribosomal subunit protein uS13.